Consider the following 61-residue polypeptide: Large ribosomal subunit protein uL30 (61 aa).

It belongs to the universal ribosomal protein uL30 family. In terms of assembly, part of the 50S ribosomal subunit.

This chain is Large ribosomal subunit protein uL30, found in Chlorobium phaeobacteroides (strain DSM 266 / SMG 266 / 2430).